The primary structure comprises 94 residues: Integration host factor subunit beta (94 aa).

Belongs to the bacterial histone-like protein family. In terms of assembly, heterodimer of an alpha and a beta chain.

This protein is one of the two subunits of integration host factor, a specific DNA-binding protein that functions in genetic recombination as well as in transcriptional and translational control. The sequence is that of Integration host factor subunit beta from Escherichia fergusonii (strain ATCC 35469 / DSM 13698 / CCUG 18766 / IAM 14443 / JCM 21226 / LMG 7866 / NBRC 102419 / NCTC 12128 / CDC 0568-73).